The chain runs to 254 residues: Phosphatidylglycerol--prolipoprotein diacylglyceryl transferase (254 aa).

4 helical membrane-spanning segments follow: residues L11–A31, F49–F69, Q84–L104, and E109–G129. A 1,2-diacyl-sn-glycero-3-phospho-(1'-sn-glycerol) is bound at residue R130. 3 consecutive transmembrane segments (helical) span residues P169–L189, G196–L216, and V228–I248.

Belongs to the Lgt family.

The protein localises to the cell membrane. The enzyme catalyses L-cysteinyl-[prolipoprotein] + a 1,2-diacyl-sn-glycero-3-phospho-(1'-sn-glycerol) = an S-1,2-diacyl-sn-glyceryl-L-cysteinyl-[prolipoprotein] + sn-glycerol 1-phosphate + H(+). It participates in protein modification; lipoprotein biosynthesis (diacylglyceryl transfer). Functionally, catalyzes the transfer of the diacylglyceryl group from phosphatidylglycerol to the sulfhydryl group of the N-terminal cysteine of a prolipoprotein, the first step in the formation of mature lipoproteins. This chain is Phosphatidylglycerol--prolipoprotein diacylglyceryl transferase, found in Clostridium botulinum (strain ATCC 19397 / Type A).